A 281-amino-acid polypeptide reads, in one-letter code: Transmembrane protein 163 (281 aa).

Over M1 to A80 the chain is Cytoplasmic. Positions I16–M44 are disordered. The chain crosses the membrane as a helical span at residues L81–V101. The Extracellular portion of the chain corresponds to S102–A108. A helical membrane pass occupies residues S109–W129. The Cytoplasmic portion of the chain corresponds to R130–M145. A helical transmembrane segment spans residues A146–I166. Residues H167–G179 are Extracellular-facing. A helical transmembrane segment spans residues F180–F200. The Cytoplasmic portion of the chain corresponds to M201 to R209. A helical transmembrane segment spans residues A210–L230. The Extracellular segment spans residues S231 to K240. The helical transmembrane segment at V241–I261 threads the bilayer. The Cytoplasmic portion of the chain corresponds to K262–E281.

It belongs to the TMEM163 family.

It is found in the cytoplasmic vesicle. Its subcellular location is the secretory vesicle. The protein resides in the synaptic vesicle membrane. The protein localises to the early endosome membrane. In terms of biological role, may bind zinc and other divalent cations and recruit them to vesicular organelles. The sequence is that of Transmembrane protein 163 (tmem163) from Xenopus laevis (African clawed frog).